Reading from the N-terminus, the 154-residue chain is MKVYEGKLNAEGLKFGIVVGRFNEFIVSKLLSGALDCLKRHGAEEDNIDITWVPGAFEIPMISKKMAFSRKYDAVICLGAVIRGSTPHFDYVSSEVSKGVAHVSLESDIPVIFSVLTTDNIEQAIERAGTKSGNKGYDGAMAAIEMANLIRELE.

Residues Phe22, Ala56–Glu58, and Ala80–Ile82 each bind 5-amino-6-(D-ribitylamino)uracil. Residue Ser85–Thr86 participates in (2S)-2-hydroxy-3-oxobutyl phosphate binding. The active-site Proton donor is His88. Phe113 serves as a coordination point for 5-amino-6-(D-ribitylamino)uracil. Position 127 (Arg127) interacts with (2S)-2-hydroxy-3-oxobutyl phosphate.

This sequence belongs to the DMRL synthase family.

The enzyme catalyses (2S)-2-hydroxy-3-oxobutyl phosphate + 5-amino-6-(D-ribitylamino)uracil = 6,7-dimethyl-8-(1-D-ribityl)lumazine + phosphate + 2 H2O + H(+). It functions in the pathway cofactor biosynthesis; riboflavin biosynthesis; riboflavin from 2-hydroxy-3-oxobutyl phosphate and 5-amino-6-(D-ribitylamino)uracil: step 1/2. Functionally, catalyzes the formation of 6,7-dimethyl-8-ribityllumazine by condensation of 5-amino-6-(D-ribitylamino)uracil with 3,4-dihydroxy-2-butanone 4-phosphate. This is the penultimate step in the biosynthesis of riboflavin. The sequence is that of 6,7-dimethyl-8-ribityllumazine synthase from Clostridium kluyveri (strain NBRC 12016).